Consider the following 1013-residue polypeptide: Putative DNA polymerase 060R (1013 aa).

The protein belongs to the DNA polymerase type-B family.

It carries out the reaction DNA(n) + a 2'-deoxyribonucleoside 5'-triphosphate = DNA(n+1) + diphosphate. DNA-directed DNA polymerase involved in viral DNA replication. The chain is Putative DNA polymerase 060R from Dryophytes versicolor (chameleon treefrog).